The sequence spans 268 residues: Microtubule-associated protein RP/EB family member 1 (268 aa).

The residue at position 2 (Ala-2) is an N-acetylalanine. The region spanning 14–116 (NLSRHDMLAW…FVQWFKKFFD (103 aa)) is the Calponin-homology (CH) domain. Lys-66 carries the post-translational modification N6-crotonyllysine. Tyr-124 carries the post-translational modification Phosphotyrosine. The tract at residues 124-268 (YDPVAARQGQ…GGPQEEQEEY (145 aa)) is interaction with MTUS2/TIP150. The tract at residues 146–187 (LNKPKKPLTSSSAAPQRPISTQRTAAAPKAGPGVVRKNPGVG) is disordered. Residues 153–169 (LTSSSAAPQRPISTQRT) show a composition bias toward polar residues. Phosphoserine is present on residues Ser-155 and Ser-165. Residues 185–255 (GVGNGDDEAA…LYATDEGFVI (71 aa)) enclose the EB1 C-terminal domain. An interaction with CDK5RAP2 region spans residues 185–268 (GVGNGDDEAA…GGPQEEQEEY (84 aa)). Residues 206–211 (TVEDLE) form an interaction with APC region. The interval 208 to 268 (EDLEKERDFY…GGPQEEQEEY (61 aa)) is DCTN1-binding. N6-acetyllysine is present on Lys-220. An APC-binding region spans residues 220–242 (KLRNIELICQENEGENDPVLQRI). The tract at residues 232-255 (EGENDPVLQRIVDILYATDEGFVI) is interaction with SKA1.

Belongs to the MAPRE family. In terms of assembly, homodimer. Heterodimer with MAPRE3. Interacts with DCTN1, DCTN2, TERF1 and dynein intermediate chain. Interaction with DIAPH1 and DIAPH2. Interacts (via C-terminal residues 206-211) with APC (via C-terminal residues 2674-2843); the interaction inhibits association with and bundling of F-actin. Interacts with CLASP2, DST, KIF2C and STIM1; probably required for their targeting to the growing microtubule plus ends. Interacts with MTUS2; interaction is direct and probably targets MTUS2 to microtubules. Interacts (via C-terminus) with SKA1 (via SXIP motif); the interaction is direct and stabilizes the kinetochore-microtubule attachment of the SKA1 complex. Interacts with APC2. Interacts with CLASP1. Interacts with CDK5RAP2. Interacts with MACF1. Interacts with RABL2/RABL2A; binds preferentially to GTP-bound RABL2. Interacts with KCNAB2. Interacts (via C-terminus) with CLIP1. Interacts with SLAIN2 and SLAIN1. Interacts with KIF18B; this interaction is required for efficient accumulation of KIF18B at microtubule plus ends. Interacts with MISP. Interacts with KNSTRN. Interacts with NCKAP5L. Interacts with CAMSAP2. Interacts with PDE4DIP isoform 13/MMG8/SMYLE; this interaction is required for its recruitment to the Golgi apparatus. Forms a pericentrosomal complex with AKAP9, CDK5RAP2 and PDE4DIP isoform 13/MMG8/SMYLE; within this complex, MAPRE1 binding to CDK5RAP2 may be mediated by PDE4DIP. Interacts with AKNA. Interacts with GAS2L1, GAS2L2, and GAS2L3. Interacts with RARRES1 and AGBL2. Acetylation at Lys-220 by KAT2B/PCAF promotes dynamic kinetochore-microtubule interactions in early mitosis. Post-translationally, crotonylated by KAT5 during mitosis, promoting astral microtubule plasticity and dynamic connection between astral microtubules and the cortex during mitotic chromosome segregation, thereby ensuring accurate spindle positioning in mitosis. Decrotonylated by HDAC3. Ubiquitously expressed.

The protein localises to the cytoplasm. It is found in the cytoskeleton. Its subcellular location is the microtubule organizing center. The protein resides in the centrosome. It localises to the golgi apparatus. The protein localises to the spindle. It is found in the spindle pole. Plus-end tracking protein (+TIP) that binds to the plus-end of microtubules and regulates the dynamics of the microtubule cytoskeleton. Recruits other +TIP proteins to microtubules by binding to a conserved Ser-X-Leu-Pro (SXLP) motif in their polypeptide chains. Promotes cytoplasmic microtubule nucleation and elongation. Involved in mitotic spindle positioning by stabilizing microtubules and promoting dynamic connection between astral microtubules and the cortex during mitotic chromosome segregation. Assists chromosome alignment in metaphase by recruiting the SKA complex to the spindle and stabilizing its interactions with microtubule bundles (K-fibers). Also acts as a regulator of minus-end microtubule organization: interacts with the complex formed by AKAP9 and PDE4DIP, leading to recruit CAMSAP2 to the Golgi apparatus, thereby tethering non-centrosomal minus-end microtubules to the Golgi, an important step for polarized cell movement. Promotes elongation of CAMSAP2-decorated microtubule stretches on the minus-end of microtubules. Acts as a regulator of autophagosome transport via interaction with CAMSAP2. Functions downstream of Rho GTPases and DIAPH1 in stable microtubule formation. May play a role in cell migration. The chain is Microtubule-associated protein RP/EB family member 1 from Homo sapiens (Human).